Here is a 169-residue protein sequence, read N- to C-terminus: Nucleoside diphosphate kinase 3-A (169 aa).

ADP contacts are provided by K29, R105, T111, R122, V129, and N132. H135 functions as the Pros-phosphohistidine intermediate in the catalytic mechanism.

The protein belongs to the NDK family. In terms of assembly, homohexamer. The cofactor is Mg(2+).

It is found in the mitochondrion outer membrane. It localises to the cytoplasm. The protein resides in the cytoskeleton. The protein localises to the cilium basal body. The catalysed reaction is a 2'-deoxyribonucleoside 5'-diphosphate + ATP = a 2'-deoxyribonucleoside 5'-triphosphate + ADP. The enzyme catalyses a ribonucleoside 5'-diphosphate + ATP = a ribonucleoside 5'-triphosphate + ADP. Its function is as follows. Catalyzes the phosphorylation of ribonucleosides and deoxyribonucleoside diphosphates, other than ATP, into the corresponding triphosphates with ATP as the major phosphate donor. The ATP gamma phosphate is transferred to the nucleoside diphosphate beta phosphate via a ping-pong mechanism, using a phosphorylated active-site intermediate. Through the catalyzed exchange of gamma-phosphate between di- and triphosphonucleosides participates in regulation of intracellular nucleotide homeostasis. Required for ciliary function during renal development. Independently of its kinase activity, facilitates mitochondrial tethering prior to membrane fusion through its direct membrane-binding and hexamerization. Implicated in repair of both single- and double-stranded breaks in DNA, independently of its kinase activity. In Xenopus laevis (African clawed frog), this protein is Nucleoside diphosphate kinase 3-A.